A 301-amino-acid chain; its full sequence is Glycine--tRNA ligase alpha subunit (301 aa).

This sequence belongs to the class-II aminoacyl-tRNA synthetase family. Tetramer of two alpha and two beta subunits.

It localises to the cytoplasm. It carries out the reaction tRNA(Gly) + glycine + ATP = glycyl-tRNA(Gly) + AMP + diphosphate. The chain is Glycine--tRNA ligase alpha subunit from Nitrosospira multiformis (strain ATCC 25196 / NCIMB 11849 / C 71).